The sequence spans 492 residues: NADH-ubiquinone oxidoreductase chain 4 (492 aa).

15 consecutive transmembrane segments (helical) span residues 9-29, 36-56, 63-83, 86-106, 115-135, 136-156, 170-190, 211-231, 242-262, 269-289, 304-324, 332-352, 370-390, 410-430, and 454-474; these read LILTSLTPLIGVFILLLIPSA, NFALWISCLTFLFSLLLWIQF, FQFSTTFLWFPFFNLYYTIGI, ISLFFILLTTLLIISCILVSW, DYLICFLILEFLLIQVFSVLD, LLLFYIYFESVLIPMFLIVGV, FFLYTLIGSLLMLLALLNIYF, IFLWLSFFASFAVKIPMIPFH, PTAGSVILAGILLKMGGYGFL, FPVASIFFTPFIFTLSLVAII, IIAYSSVSHMGFVTIGIFSLN, ILLMLSHGLVSSALFLCIGVL, VMPLFGVFFLFFTFANLGFPG, TLTLFASLGMIFGAAYSIWLF, and FWILIPLAILILWMGIYPNSF.

This sequence belongs to the complex I subunit 4 family.

It is found in the mitochondrion membrane. It carries out the reaction a ubiquinone + NADH + 5 H(+)(in) = a ubiquinol + NAD(+) + 4 H(+)(out). Its function is as follows. Core subunit of the mitochondrial membrane respiratory chain NADH dehydrogenase (Complex I) that is believed to belong to the minimal assembly required for catalysis. Complex I functions in the transfer of electrons from NADH to the respiratory chain. The immediate electron acceptor for the enzyme is believed to be ubiquinone. This is NADH-ubiquinone oxidoreductase chain 4 (ND4) from Chondrus crispus (Carrageen Irish moss).